Consider the following 580-residue polypeptide: Xylulose kinase (580 aa).

H99, R170, D280, and N281 together coordinate substrate. ATP is bound by residues W355, 441 to 442 (GA), and N445.

This sequence belongs to the FGGY kinase family. As to quaternary structure, monomer.

The catalysed reaction is D-xylulose + ATP = D-xylulose 5-phosphate + ADP + H(+). In terms of biological role, phosphorylates D-xylulose to produce D-xylulose 5-phosphate, a molecule that may play an important role in the regulation of glucose metabolism and lipogenesis. The polypeptide is Xylulose kinase (XYLB) (Pongo abelii (Sumatran orangutan)).